Reading from the N-terminus, the 336-residue chain is 3-isopropylmalate dehydrogenase (336 aa).

Positions 87, 97, 121, and 211 each coordinate substrate. Residues Asp-211, Asp-235, and Asp-239 each coordinate Mg(2+). Gly-271 to Asp-283 contacts NAD(+).

Belongs to the isocitrate and isopropylmalate dehydrogenases family. LeuB type 2 subfamily. Homodimer. It depends on Mg(2+) as a cofactor. Requires Mn(2+) as cofactor.

It is found in the cytoplasm. It carries out the reaction (2R,3S)-3-isopropylmalate + NAD(+) = 4-methyl-2-oxopentanoate + CO2 + NADH. Its pathway is amino-acid biosynthesis; L-leucine biosynthesis; L-leucine from 3-methyl-2-oxobutanoate: step 3/4. Functionally, catalyzes the oxidation of 3-carboxy-2-hydroxy-4-methylpentanoate (3-isopropylmalate) to 3-carboxy-4-methyl-2-oxopentanoate. The product decarboxylates to 4-methyl-2 oxopentanoate. The chain is 3-isopropylmalate dehydrogenase from Rhodococcus jostii (strain RHA1).